The primary structure comprises 88 residues: Small ribosomal subunit protein bS20 (88 aa).

The span at 1–23 (MPNTKSAEKALRVADANRQENRR) shows a compositional bias: basic and acidic residues. 2 disordered regions span residues 1-28 (MPNT…KSQV) and 69-88 (PKNA…QAAK). The segment covering 71–81 (NAARRKSRLMK) has biased composition (basic residues).

It belongs to the bacterial ribosomal protein bS20 family.

Functionally, binds directly to 16S ribosomal RNA. This Dehalococcoides mccartyi (strain ATCC BAA-2266 / KCTC 15142 / 195) (Dehalococcoides ethenogenes (strain 195)) protein is Small ribosomal subunit protein bS20.